The sequence spans 161 residues: 18.1 kDa class I heat shock protein (161 aa).

In terms of domain architecture, sHSP spans 47 to 161 (ETAAFAGARI…PDVKSIQVTG (115 aa)).

It belongs to the small heat shock protein (HSP20) family. As to quaternary structure, may form oligomeric structures.

It localises to the cytoplasm. This chain is 18.1 kDa class I heat shock protein (HSP18.1), found in Oryza sativa subsp. japonica (Rice).